We begin with the raw amino-acid sequence, 400 residues long: MSLWTVLLAAGSGTRLAQASGGVKKQFLSVGGRPLYWKALTAFAKSPDVAGVVVVFAPEDLAEATRELAGFLDANHPGLPVLTAAGGARRQDSVKNGLDALPREARLVLIHDAARPFVDAGLIARVADALAAGRKAVIPTLPVTDTVKQVDGDRVTATLPRHELAAVQTPQGFDLTLLRQAYAHARPDFDVTDDASLVEHYGQPVFTVPGAPRNMKITHPEDLASLAEAAAPPVPVTGYGYDVHRYADPRNPGKQPPRPMKLGGFPILGAPEVLAHSDGDVLLHALTDAVLGCVAGGDIGRLFPDSNPDFDNMASGVFLSEALLAAKAKGLTITHVDLTIIAQIPKISPHAEAIRLNVAALLGLNKEQVNLKATTEEGLGFTGEKKGIKAVALVSGWRRP.

Residues 1 to 235 (MSLWTVLLAA…LAEAAAPPVP (235 aa)) are 2-C-methyl-D-erythritol 4-phosphate cytidylyltransferase. The interval 236–400 (VTGYGYDVHR…VALVSGWRRP (165 aa)) is 2-C-methyl-D-erythritol 2,4-cyclodiphosphate synthase. A divalent metal cation contacts are provided by Asp242 and His244. 4-CDP-2-C-methyl-D-erythritol 2-phosphate contacts are provided by residues 242-244 (DVH) and 276-277 (HS). His284 provides a ligand contact to a divalent metal cation. Residues 298–300 (DIG), 303–307 (FPDSN), 374–377 (TTEE), and Phe381 each bind 4-CDP-2-C-methyl-D-erythritol 2-phosphate.

The protein in the N-terminal section; belongs to the IspD/TarI cytidylyltransferase family. IspD subfamily. This sequence in the C-terminal section; belongs to the IspF family. A divalent metal cation serves as cofactor.

It carries out the reaction 2-C-methyl-D-erythritol 4-phosphate + CTP + H(+) = 4-CDP-2-C-methyl-D-erythritol + diphosphate. It catalyses the reaction 4-CDP-2-C-methyl-D-erythritol 2-phosphate = 2-C-methyl-D-erythritol 2,4-cyclic diphosphate + CMP. The protein operates within isoprenoid biosynthesis; isopentenyl diphosphate biosynthesis via DXP pathway; isopentenyl diphosphate from 1-deoxy-D-xylulose 5-phosphate: step 2/6. It participates in isoprenoid biosynthesis; isopentenyl diphosphate biosynthesis via DXP pathway; isopentenyl diphosphate from 1-deoxy-D-xylulose 5-phosphate: step 4/6. Bifunctional enzyme that catalyzes the formation of 4-diphosphocytidyl-2-C-methyl-D-erythritol from CTP and 2-C-methyl-D-erythritol 4-phosphate (MEP) (IspD), and catalyzes the conversion of 4-diphosphocytidyl-2-C-methyl-D-erythritol 2-phosphate (CDP-ME2P) to 2-C-methyl-D-erythritol 2,4-cyclodiphosphate (ME-CPP) with a corresponding release of cytidine 5-monophosphate (CMP) (IspF). This is Bifunctional enzyme IspD/IspF from Solidesulfovibrio magneticus (strain ATCC 700980 / DSM 13731 / RS-1) (Desulfovibrio magneticus).